Here is an 88-residue protein sequence, read N- to C-terminus: uncharacterized protein (88 aa).

The next 2 membrane-spanning stretches (helical) occupy residues 8–28 (IFLSFFSPIYLSLLLNGSIFF) and 45–65 (ELLRCQICLCSLFWMVTVINL).

Its subcellular location is the membrane. This is an uncharacterized protein from Saccharomyces cerevisiae (strain ATCC 204508 / S288c) (Baker's yeast).